We begin with the raw amino-acid sequence, 458 residues long: MKKQNPWIYLNEEEKNQILNFSESYKKFISKFKTEREVTAYALDKAKKLGFINAEEKKNLMPGDKIFYTCREKSVAFAIIGKNPIEDGMNFIVSHTDSPRLDAKPSPISEENELTFIKTNYYGGIKKYQWLSTPLSIRGVVFLKNGEKVEINIGDNENDPVFVIPDILPHLDRKIQRNKKSDEIVEGENLKILIGSLPIETKEKNKVKLATLQLIKEKYKIEEEDFVSSEIEIVPAGTAKDVGFDKALIGAYGQDDKICVFTSLESIFDLEETPNKTAICFLVDKEEIGSTGSTGLDSRYLEYFVSDMIFKIKKSEYNNLHVQKALWNSKSISADVCAAINPLFSSVHDEQNAPQLGYGIPIMKYTGHGGKSMASDADAELVSYIRQLLNKNNIAWQVATLGKVEEGGGGTVAKFLAGYGIRTIDMGPAVISMHSPMEITSKFDLYNAYLAYKAFYRE.

Positions 95, 170, and 434 each coordinate Zn(2+).

The protein belongs to the peptidase M18 family. Zn(2+) is required as a cofactor.

The chain is Probable M18 family aminopeptidase 1 (apeA) from Borreliella burgdorferi (strain ATCC 35210 / DSM 4680 / CIP 102532 / B31) (Borrelia burgdorferi).